Consider the following 597-residue polypeptide: Elongation factor 4 (597 aa).

A tr-type G domain is found at 2–184 (DHIRNFSIIA…SLIAKVPPPK (183 aa)). GTP contacts are provided by residues 14 to 19 (DHGKST) and 131 to 134 (NKID).

It belongs to the TRAFAC class translation factor GTPase superfamily. Classic translation factor GTPase family. LepA subfamily.

Its subcellular location is the cell inner membrane. It carries out the reaction GTP + H2O = GDP + phosphate + H(+). Its function is as follows. Required for accurate and efficient protein synthesis under certain stress conditions. May act as a fidelity factor of the translation reaction, by catalyzing a one-codon backward translocation of tRNAs on improperly translocated ribosomes. Back-translocation proceeds from a post-translocation (POST) complex to a pre-translocation (PRE) complex, thus giving elongation factor G a second chance to translocate the tRNAs correctly. Binds to ribosomes in a GTP-dependent manner. The sequence is that of Elongation factor 4 from Burkholderia ambifaria (strain MC40-6).